Consider the following 504-residue polypeptide: Deoxyguanosinetriphosphate triphosphohydrolase (504 aa).

The HD domain maps to 66-273; sequence RLTHSMEVQQ…MEAADDISYC (208 aa).

It belongs to the dGTPase family. Type 1 subfamily. As to quaternary structure, homotetramer. The cofactor is Mg(2+).

It catalyses the reaction dGTP + H2O = 2'-deoxyguanosine + triphosphate + H(+). In terms of biological role, dGTPase preferentially hydrolyzes dGTP over the other canonical NTPs. This is Deoxyguanosinetriphosphate triphosphohydrolase from Enterobacter sp. (strain 638).